Consider the following 482-residue polypeptide: Bactericidal permeability-increasing protein (482 aa).

Residues 1–26 (MARGPDTARRWATLVVLAALSTAVTT) form the signal peptide. Residues 27 to 36 (TNPGIVARIT) are central sheet, part 1. Residues 36–219 (TQKGLDYACQ…SKLQPYFQTL (184 aa)) are N-terminal barrel. N62 carries an N-linked (GlcNAc...) asparagine glycan. C161 and C201 are disulfide-bonded. The central sheet, part 2 stretch occupies residues 221–285 (VTTKLDKVAG…HDRMVYLGIS (65 aa)). The tract at residues 235 to 240 (LVAPPR) is cleavage sites for elastase. A C-terminal barrel region spans residues 286–456 (EYFFNTAGFV…LQKGFPLPLP (171 aa)). Residues N303, N375, N389, and N463 are each glycosylated (N-linked (GlcNAc...) asparagine). The interval 463 to 482 (NLTLQPYQDFLLFGADVHYS) is central sheet, part 3.

Belongs to the BPI/LBP/Plunc superfamily. BPI/LBP family. In terms of assembly, monomer. Homodimer; disulfide-linked. In terms of tissue distribution, restricted to cells of the myeloid series.

The protein localises to the secreted. It is found in the cytoplasmic granule membrane. Its function is as follows. The cytotoxic action of BPI is limited to many species of Gram-negative bacteria; this specificity may be explained by a strong affinity of the very basic N-terminal half for the negatively charged lipopolysaccharides that are unique to the Gram-negative bacterial outer envelope. In Bos taurus (Bovine), this protein is Bactericidal permeability-increasing protein (BPI).